The primary structure comprises 981 residues: Isoleucine--tRNA ligase (981 aa).

Residues 50–60 carry the 'HIGH' region motif; it reads PTTNGMPHVGH. Residues 604-608 carry the 'KMSKS' region motif; the sequence is KMSKS. Lys607 is a binding site for ATP.

It belongs to the class-I aminoacyl-tRNA synthetase family. IleS type 2 subfamily. Monomer. Requires Zn(2+) as cofactor.

The protein localises to the cytoplasm. It catalyses the reaction tRNA(Ile) + L-isoleucine + ATP = L-isoleucyl-tRNA(Ile) + AMP + diphosphate. Catalyzes the attachment of isoleucine to tRNA(Ile). As IleRS can inadvertently accommodate and process structurally similar amino acids such as valine, to avoid such errors it has two additional distinct tRNA(Ile)-dependent editing activities. One activity is designated as 'pretransfer' editing and involves the hydrolysis of activated Val-AMP. The other activity is designated 'posttransfer' editing and involves deacylation of mischarged Val-tRNA(Ile). In Pyrobaculum aerophilum (strain ATCC 51768 / DSM 7523 / JCM 9630 / CIP 104966 / NBRC 100827 / IM2), this protein is Isoleucine--tRNA ligase.